The primary structure comprises 262 residues: Acyl-[acyl-carrier-protein]--UDP-N-acetylglucosamine O-acyltransferase (262 aa).

The protein belongs to the transferase hexapeptide repeat family. LpxA subfamily. In terms of assembly, homotrimer.

The protein resides in the cytoplasm. The enzyme catalyses a (3R)-hydroxyacyl-[ACP] + UDP-N-acetyl-alpha-D-glucosamine = a UDP-3-O-[(3R)-3-hydroxyacyl]-N-acetyl-alpha-D-glucosamine + holo-[ACP]. It functions in the pathway glycolipid biosynthesis; lipid IV(A) biosynthesis; lipid IV(A) from (3R)-3-hydroxytetradecanoyl-[acyl-carrier-protein] and UDP-N-acetyl-alpha-D-glucosamine: step 1/6. Involved in the biosynthesis of lipid A, a phosphorylated glycolipid that anchors the lipopolysaccharide to the outer membrane of the cell. This chain is Acyl-[acyl-carrier-protein]--UDP-N-acetylglucosamine O-acyltransferase, found in Salmonella schwarzengrund (strain CVM19633).